We begin with the raw amino-acid sequence, 164 residues long: Phosphopantetheine adenylyltransferase (164 aa).

Residue serine 9 coordinates substrate. Residues 9–10 (SF) and histidine 17 each bind ATP. Substrate-binding residues include lysine 41, valine 78, and arginine 92. Residues 93–95 (GLR), glutamate 103, and 128–134 (SRPITAT) contribute to the ATP site.

This sequence belongs to the bacterial CoaD family. In terms of assembly, homohexamer. The cofactor is Mg(2+).

It is found in the cytoplasm. It carries out the reaction (R)-4'-phosphopantetheine + ATP + H(+) = 3'-dephospho-CoA + diphosphate. It functions in the pathway cofactor biosynthesis; coenzyme A biosynthesis; CoA from (R)-pantothenate: step 4/5. Functionally, reversibly transfers an adenylyl group from ATP to 4'-phosphopantetheine, yielding dephospho-CoA (dPCoA) and pyrophosphate. This is Phosphopantetheine adenylyltransferase from Rhizobium leguminosarum bv. trifolii (strain WSM2304).